Reading from the N-terminus, the 193-residue chain is Translocation protein SEC72 (193 aa).

In terms of assembly, component of the heterotetrameric Sec62/63complex composed of SEC62, SEC63, SEC71 and SEC72. The Sec62/63 complex associates with the Sec61 complex to form the Sec complex. May interact with protein YLR301W. Part of a complex consisting of KAR2, SEC63, SEC66 and SEC72.

The protein localises to the cytoplasm. Functionally, acts as a non-essential component of the Sec62/63 complex which is involved in SRP-independent post-translational translocation across the endoplasmic reticulum (ER) and functions together with the Sec61 complex and KAR2 in a channel-forming translocon complex. A cycle of assembly and disassembly of Sec62/63 complex from SEC61 may govern the activity of the translocon. SEC72 may be involved in signal peptide recognition for a defined subset of leader peptides, or may increase the efficiency of unusual or 'difficult' secretory precursors to the translocation pore, it may be that this protein binds charged leader peptides to the membrane until they engage the translocation apparatus. This Saccharomyces cerevisiae (strain ATCC 204508 / S288c) (Baker's yeast) protein is Translocation protein SEC72 (SEC72).